An 828-amino-acid chain; its full sequence is E3 ubiquitin-protein ligase bre-1 (828 aa).

Residues 1–25 (MMKRNNEGIGGEGVANSPPDDTQQK) form a disordered region. The segment at 1–309 (MMKRNNEGIG…SREIEALRAD (309 aa)) is interaction with ubc-1. 2 coiled-coil regions span residues 53 to 92 (QAAK…FLKV) and 185 to 251 (HKEL…TEKQ). A compositionally biased stretch (low complexity) spans 269-298 (ASGNATASSSATLNQSEKKMGSPGSPPSES). The disordered stretch occupies residues 269–304 (ASGNATASSSATLNQSEKKMGSPGSPPSESTSREIE). Coiled coils occupy residues 311–345 (DEQA…KMET), 460–616 (VNTL…RNLK), and 660–756 (DEVL…NDSA). The segment at 776-815 (CPSCKTRPKDCIMLKCYHLFCETCIKTMYDTRQRKCPKCN) adopts an RING-type zinc-finger fold.

Belongs to the BRE1 family. In terms of assembly, interacts with ubc-1. Interacts with mrg-1.

It is found in the nucleus. The catalysed reaction is S-ubiquitinyl-[E2 ubiquitin-conjugating enzyme]-L-cysteine + [acceptor protein]-L-lysine = [E2 ubiquitin-conjugating enzyme]-L-cysteine + N(6)-ubiquitinyl-[acceptor protein]-L-lysine.. It participates in protein modification; protein ubiquitination. E3 ubiquitin-protein ligase that mediates monoubiquitination of 'Lys-117' of histone H2B. H2B 'Lys-117' ubiquitination gives a specific tag for epigenetic transcriptional activation and is also prerequisite for histone H3 'Lys-4' and 'Lys-79' methylation. Involved in regulating stem cell proliferative fate. This Caenorhabditis briggsae protein is E3 ubiquitin-protein ligase bre-1.